A 419-amino-acid chain; its full sequence is Inositol-tetrakisphosphate 1-kinase (419 aa).

Residue lysine 18 participates in 1D-myo-inositol 1,3,4-trisphosphate binding. ATP is bound by residues arginine 106 and lysine 157. Residues 117-334 (EAYMKDDRIC…TGGAATEEVA (218 aa)) enclose the ATP-grasp domain. Residues histidine 167 and lysine 199 each coordinate 1D-myo-inositol 1,3,4-trisphosphate. Residues 188 to 199 (QNFINHNAVLYK), serine 214, serine 232, and serine 236 contribute to the ATP site. Mg(2+) contacts are provided by aspartate 281, aspartate 295, and asparagine 297. 1D-myo-inositol 1,3,4-trisphosphate is bound at residue asparagine 297. At lysine 388 the chain carries N6-acetyllysine; by EP300 and CREBBP. Serine 401 is modified (phosphoserine). Position 415 is an N6-acetyllysine; by EP300 and CREBBP (lysine 415).

Belongs to the ITPK1 family. Monomer. Interacts with GPS1/COPS1. Requires Mg(2+) as cofactor. Acetylation by EP300 and CREBBP destabilizes ITPK1, and down-regulates enzymatic activity. Deacetylated by SIRT1.

It carries out the reaction 1D-myo-inositol 3,4,5,6-tetrakisphosphate + ATP = 1D-myo-inositol 1,3,4,5,6-pentakisphosphate + ADP + H(+). The enzyme catalyses 1D-myo-inositol 1,3,4-trisphosphate + ATP = 1D-myo-inositol 1,3,4,5-tetrakisphosphate + ADP + H(+). The catalysed reaction is 1D-myo-inositol 1,3,4-trisphosphate + ATP = 1D-myo-inositol 1,3,4,6-tetrakisphosphate + ADP + H(+). It catalyses the reaction 1D-myo-inositol 3,4,6-trisphosphate + ATP = 1D-myo-inositol 1,3,4,6-tetrakisphosphate + ADP + H(+). It carries out the reaction 1D-myo-inositol 1,3,4-trisphosphate + 1D-myo-inositol 1,3,4,5,6-pentakisphosphate = 1D-myo-inositol 3,4,5,6-tetrakisphosphate + 1D-myo-inositol 1,3,4,6-tetrakisphosphate. The enzyme catalyses 1D-myo-inositol 1,3,4-trisphosphate + 1D-myo-inositol 1,3,4,5,6-pentakisphosphate = 1D-myo-inositol 3,4,5,6-tetrakisphosphate + 1D-myo-inositol 1,3,4,5-tetrakisphosphate. Its function is as follows. Kinase that can phosphorylate various inositol polyphosphate such as Ins(3,4,5,6)P4 or Ins(1,3,4)P3. Phosphorylates Ins(3,4,5,6)P4 at position 1 to form Ins(1,3,4,5,6)P5. This reaction is thought to have regulatory importance, since Ins(3,4,5,6)P4 is an inhibitor of plasma membrane Ca(2+)-activated Cl(-) channels, while Ins(1,3,4,5,6)P5 is not. Also phosphorylates Ins(1,3,4)P3 on O-5 and O-6 to form Ins(1,3,4,6)P4, an essential molecule in the hexakisphosphate (InsP6) pathway. Also acts as an inositol polyphosphate phosphatase that dephosphorylates Ins(1,3,4,5)P4 and Ins(1,3,4,6)P4 to Ins(1,3,4)P3, and Ins(1,3,4,5,6)P5 to Ins(3,4,5,6)P4. May also act as an isomerase that interconverts the inositol tetrakisphosphate isomers Ins(1,3,4,5)P4 and Ins(1,3,4,6)P4 in the presence of ADP and magnesium. Probably acts as the rate-limiting enzyme of the InsP6 pathway. Modifies TNF-alpha-induced apoptosis by interfering with the activation of TNFRSF1A-associated death domain. Plays an important role in MLKL-mediated necroptosis. Produces highly phosphorylated inositol phosphates such as inositolhexakisphosphate (InsP6) which bind to MLKL mediating the release of an N-terminal auto-inhibitory region leading to its activation. Essential for activated phospho-MLKL to oligomerize and localize to the cell membrane during necroptosis. The chain is Inositol-tetrakisphosphate 1-kinase from Mus musculus (Mouse).